Here is a 453-residue protein sequence, read N- to C-terminus: tRNA modification GTPase MnmE (453 aa).

Arg28, Glu90, and Arg129 together coordinate (6S)-5-formyl-5,6,7,8-tetrahydrofolate. Residues 224-375 (GLRVAIIGRP…LSSALLKLCG (152 aa)) form the TrmE-type G domain. Asn234 is a K(+) binding site. Residues 234-239 (NVGKSS), 253-259 (TDLPGTT), 278-281 (DTAG), and 356-358 (SAR) each bind GTP. Position 238 (Ser238) interacts with Mg(2+). Positions 253, 255, and 258 each coordinate K(+). Position 259 (Thr259) interacts with Mg(2+). Lys453 provides a ligand contact to (6S)-5-formyl-5,6,7,8-tetrahydrofolate.

It belongs to the TRAFAC class TrmE-Era-EngA-EngB-Septin-like GTPase superfamily. TrmE GTPase family. As to quaternary structure, homodimer. Heterotetramer of two MnmE and two MnmG subunits. The cofactor is K(+).

It is found in the cytoplasm. Its function is as follows. Exhibits a very high intrinsic GTPase hydrolysis rate. Involved in the addition of a carboxymethylaminomethyl (cmnm) group at the wobble position (U34) of certain tRNAs, forming tRNA-cmnm(5)s(2)U34. The polypeptide is tRNA modification GTPase MnmE (Synechococcus sp. (strain RCC307)).